The chain runs to 905 residues: Protein translocase subunit SecA (905 aa).

Residues Q86, 104–108 (GEGKT), and D499 contribute to the ATP site. 4 residues coordinate Zn(2+): C890, C892, C901, and H902.

This sequence belongs to the SecA family. As to quaternary structure, monomer and homodimer. Part of the essential Sec protein translocation apparatus which comprises SecA, SecYEG and auxiliary proteins SecDF-YajC and YidC. It depends on Zn(2+) as a cofactor.

The protein resides in the cell inner membrane. Its subcellular location is the cytoplasm. It carries out the reaction ATP + H2O + cellular proteinSide 1 = ADP + phosphate + cellular proteinSide 2.. Its function is as follows. Part of the Sec protein translocase complex. Interacts with the SecYEG preprotein conducting channel. Has a central role in coupling the hydrolysis of ATP to the transfer of proteins into and across the cell membrane, serving both as a receptor for the preprotein-SecB complex and as an ATP-driven molecular motor driving the stepwise translocation of polypeptide chains across the membrane. The polypeptide is Protein translocase subunit SecA (Rickettsia typhi (strain ATCC VR-144 / Wilmington)).